The sequence spans 75 residues: Putative DNA-directed RNA polymerase subunit omega (75 aa).

The protein belongs to the RNA polymerase subunit omega family.

The protein localises to the plastid. Its subcellular location is the chloroplast. The enzyme catalyses RNA(n) + a ribonucleoside 5'-triphosphate = RNA(n+1) + diphosphate. Its function is as follows. May be involved in RNA polymerase activity. The chain is Putative DNA-directed RNA polymerase subunit omega (rpoZ) from Mesostigma viride (Green alga).